We begin with the raw amino-acid sequence, 1186 residues long: Syntaxin-binding protein 5-like (1186 aa).

The residue at position 1 (M1) is an N-acetylmethionine. The interval 15–40 (ASSPGSGSSSGSNSGGGAGSGSVHPA) is disordered. Residues 16 to 26 (SSPGSGSSSGS) show a composition bias toward low complexity. WD repeat units lie at residues 74–107 (TALAFDPVQKILAIGTRTGAIRILGRPGVDCYCQ), 114–153 (VLQLQFLINEGALVSASSDDTLHLWNLRQKRPAILHSLKF), 158–194 (ITYCHLPFQSKWLYVGTERGNTHIVNIESFILSGYVI), 213–247 (HLSDSPRDEGKLLIGYENGTVVFWDLKSKRAELRV), 253–285 (IHSIDWHHEGKQFMCSHSDGSLTLWNLKSPSRP), 307–349 (PILK…KAIT), 357–391 (IVEFLTLCETPYPNEFQEPYAVVVLLEKDLIVVDL), 413–490 (TCTA…YKLK), 518–629 (QMIY…ELVI), and 643–705 (TSLA…IADN). The residue at position 568 (T568) is a Phosphothreonine. 3 positions are modified to phosphoserine: S574, S589, and S593. T596 bears the Phosphothreonine mark. S599 bears the Phosphoserine mark. Position 709 is an omega-N-methylarginine (R709). The segment covering 748-769 (TSDHVNGHCTSPTSQSCSSGKR) has biased composition (polar residues). The disordered stretch occupies residues 748–771 (TSDHVNGHCTSPTSQSCSSGKRLS). A phosphoserine mark is found at S763, S765, S766, S771, S772, S793, S800, S812, S820, S822, and S823. 4 WD repeats span residues 832–889 (ITAL…SGTF), 898–969 (TFSC…QTCL), 974–1018 (ITET…LDVN), and 1032–1055 (CFTNEGQALYLVSPTEIQRLTYSQ). Phosphothreonine is present on T1093. Positions 1121 to 1181 (SIEGMKGAAG…HELMLKYKDK (61 aa)) constitute a v-SNARE coiled-coil homology domain.

This sequence belongs to the WD repeat L(2)GL family. In terms of assembly, interacts with STX1A and STX4. In terms of processing, phosphorylated, leading to STXBP5L increased turnover and subsequent de-repression of insulin secretion. Phosphorylated on serine residues in response to glucose or phorbol esters. Ubiquitinated by the E3 ligase SYVN1, leading to STXBP5L proteasomal degradation. Detected in kidney, hippocampus and lung carcinoma.

It is found in the cytoplasm. Its subcellular location is the cell membrane. The protein resides in the membrane. In terms of biological role, plays a role in vesicle trafficking and exocytosis inhibition. In pancreatic beta-cells, inhibits insulin secretion probably by interacting with and regulating STX1A and STX4, key t-SNARE proteins involved in the fusion of insulin granules to the plasma membrane. Also plays a role in neurotransmitter release by inhibiting basal acetylcholine release from axon terminals and by preventing synaptic fatigue upon repetitive stimulation. Promotes as well axonal outgrowth. The polypeptide is Syntaxin-binding protein 5-like (STXBP5L) (Homo sapiens (Human)).